A 1230-amino-acid chain; its full sequence is ATP-dependent helicase/nuclease subunit A (1230 aa).

The region spanning 4–480 is the UvrD-like helicase ATP-binding domain; that stretch reads RNWTGPQEAA…IDLSHNFRSR (477 aa). 25-32 is an ATP binding site; the sequence is AGAGSGKT. Positions 517–799 constitute a UvrD-like helicase C-terminal domain; the sequence is AQLEGSGPPV…RIMSIHQAKG (283 aa). The disordered stretch occupies residues 535-554; the sequence is TSVGRDTAGTADDEPDRSDE. Over residues 545-554 the composition is skewed to acidic residues; that stretch reads ADDEPDRSDE.

It belongs to the helicase family. AddA subfamily. In terms of assembly, heterodimer of AddA and AddB/RexB. Mg(2+) is required as a cofactor.

It carries out the reaction Couples ATP hydrolysis with the unwinding of duplex DNA by translocating in the 3'-5' direction.. The enzyme catalyses ATP + H2O = ADP + phosphate + H(+). The heterodimer acts as both an ATP-dependent DNA helicase and an ATP-dependent, dual-direction single-stranded exonuclease. Recognizes the chi site generating a DNA molecule suitable for the initiation of homologous recombination. The AddA nuclease domain is required for chi fragment generation; this subunit has the helicase and 3' -&gt; 5' nuclease activities. The polypeptide is ATP-dependent helicase/nuclease subunit A (Desulforudis audaxviator (strain MP104C)).